Consider the following 1128-residue polypeptide: Glutamate receptor-interacting protein 1 (1128 aa).

S43 bears the Phosphoserine mark. 6 PDZ domains span residues 53–136 (VVEL…EYEL), 150–238 (TVEV…EYDV), 252–336 (LVEV…LPHH), 472–561 (EVVL…EFDV), 573–658 (HVKL…RKDE), and 673–755 (TVEL…KKQT). 2 disordered regions span residues 754–798 (QTDA…YPST) and 935–981 (MSLN…GRKS). The span at 944 to 974 (PRSQLGRQASFQERSSSRPHYSQTTRSNTLP) shows a compositional bias: polar residues. Residues 1004–1086 (KVTLYKDSDM…KLDLVISRNP (83 aa)) form the PDZ 7 domain. A compositionally biased stretch (polar residues) spans 1093-1115 (IDQQSLPGDWSEQNSAFFQQPSH). Positions 1093-1128 (IDQQSLPGDWSEQNSAFFQQPSHGGNLETREPTNTL) are disordered.

Interacts with EPHA7, EPHB2, KIF5A, KIF5B, KIF5C, GRIA2, GRIA3, GRIPAP1/GRASP1, PPFIA1, PPFIA4, FRAS1, PLCD4, PTPRF and liprins-alpha. Can form homomultimers or heteromultimers with GRIP2. Forms a ternary complex with GRIA2 and CSPG4. Interacts with ATAD1 in an ATP-dependent manner. ATAD1-catalyzed ATP hydrolysis disrupts binding to ATAD1 and to GRIA2 and leads to AMPAR complex disassembly. Interacts with EFNB1, EFNB3 and the C-terminal tail of PRLHR. Interacts with SLC30A9. Interacts with BUD23. Forms a complex with NSG1, GRIA2 and STX12; controls the intracellular fate of AMPAR and the endosomal sorting of the GRIA2 subunit toward recycling and membrane targeting. Interacts with NSG1.

It localises to the cytoplasmic vesicle. The protein localises to the perikaryon. Its subcellular location is the cell projection. The protein resides in the dendrite. It is found in the cytoplasm. It localises to the endomembrane system. The protein localises to the postsynaptic cell membrane. Its subcellular location is the postsynaptic density. The protein resides in the endoplasmic reticulum membrane. May play a role as a localized scaffold for the assembly of a multiprotein signaling complex and as mediator of the trafficking of its binding partners at specific subcellular location in neurons. Through complex formation with NSG1, GRIA2 and STX12 controls the intracellular fate of AMPAR and the endosomal sorting of the GRIA2 subunit toward recycling and membrane targeting. The polypeptide is Glutamate receptor-interacting protein 1 (GRIP1) (Homo sapiens (Human)).